We begin with the raw amino-acid sequence, 214 residues long: Histidine biosynthesis bifunctional protein HisIE (214 aa).

A phosphoribosyl-AMP cyclohydrolase region spans residues 1-125 (MPATALSLPL…ESIEPPPADT (125 aa)). Positions 126–214 (LSQVYNIVCQ…VYEQLQLRRR (89 aa)) are phosphoribosyl-ATP pyrophosphohydrolase.

The protein in the N-terminal section; belongs to the PRA-CH family. In the C-terminal section; belongs to the PRA-PH family.

Its subcellular location is the cytoplasm. It catalyses the reaction 1-(5-phospho-beta-D-ribosyl)-ATP + H2O = 1-(5-phospho-beta-D-ribosyl)-5'-AMP + diphosphate + H(+). The catalysed reaction is 1-(5-phospho-beta-D-ribosyl)-5'-AMP + H2O = 1-(5-phospho-beta-D-ribosyl)-5-[(5-phospho-beta-D-ribosylamino)methylideneamino]imidazole-4-carboxamide. It functions in the pathway amino-acid biosynthesis; L-histidine biosynthesis; L-histidine from 5-phospho-alpha-D-ribose 1-diphosphate: step 2/9. It participates in amino-acid biosynthesis; L-histidine biosynthesis; L-histidine from 5-phospho-alpha-D-ribose 1-diphosphate: step 3/9. The polypeptide is Histidine biosynthesis bifunctional protein HisIE (Thermosynechococcus vestitus (strain NIES-2133 / IAM M-273 / BP-1)).